We begin with the raw amino-acid sequence, 411 residues long: KIN17-like protein (411 aa).

The C2H2-type zinc-finger motif lies at 28 to 50 (CQMCQKQCRDENGFKCHCMSESH). The tract at residues 51–160 (QRQMQVFGQN…KERLKNKRVK (110 aa)) is winged helix-turn-helix (wHTH). Positions 147–183 (ETLFKERLKNKRVKSDLAEEEKQEREIQRQIERAAEK) form a coiled coil. 2 disordered regions span residues 182-211 (EKLNGGGGEGETSGNDEVVDDGDDERKKDE) and 232-286 (VATG…EEEK). Residues 253–286 (KVERGEKRKRSGDSGRSEKERRSALDELMKEEEK) show a composition bias toward basic and acidic residues. The short motif at 259-262 (KRKR) is the Nuclear localization signal (NLS) element. The stretch at 265–294 (DSGRSEKERRSALDELMKEEEKKKERMNRK) forms a coiled coil. Residues 301-352 (GIIVKVMSKALAEKGYYKQKGVVKKVIDNYVGEIKMLDSKHVLRVDQKELET) are C-terminal subdomain A. Residues 358 to 409 (GGMVKIVNGAYRGSNARLLGVDTEKFCAKVQIEKGVYDGRVIKSIEYEDICK) are C-terminal subdomain B.

Belongs to the KIN17 family. In terms of assembly, interacts with SPL7. Expressed in root vasculature, lateral roots, cotyledons, rosette leaves, cauline leaves, stems, sepals, style of pistils, mature pollen grains and siliques.

The protein localises to the nucleus speckle. Functionally, promotes the copper deficiency response by direct interaction with SPL7. Acts with SPL7 in a common pathway to promote copper-responsive genes and alleviate oxidative stress during copper-limiting periods. May promote SPL7 function when copper is limiting. Participates in the control of general plant growth and development, and in the response to counteract the negative effects of UV radiation. In Arabidopsis thaliana (Mouse-ear cress), this protein is KIN17-like protein.